Consider the following 1116-residue polypeptide: DNA-directed RNA polymerase subunit beta (1116 aa).

The span at 1070 to 1100 (KIREEEKEREKEREAREMEDPEKIVSKIDAK) shows a compositional bias: basic and acidic residues. The tract at residues 1070–1116 (KIREEEKEREKEREAREMEDPEKIVSKIDAKQKKKYKKTKKQTEKKK) is disordered. Positions 1101–1116 (QKKKYKKTKKQTEKKK) are enriched in basic residues.

It belongs to the RNA polymerase beta chain family. In terms of assembly, in plastids the minimal PEP RNA polymerase catalytic core is composed of four subunits: alpha, beta, beta', and beta''. When a (nuclear-encoded) sigma factor is associated with the core the holoenzyme is formed, which can initiate transcription.

It localises to the plastid. Its subcellular location is the chloroplast. It carries out the reaction RNA(n) + a ribonucleoside 5'-triphosphate = RNA(n+1) + diphosphate. In terms of biological role, DNA-dependent RNA polymerase catalyzes the transcription of DNA into RNA using the four ribonucleoside triphosphates as substrates. The sequence is that of DNA-directed RNA polymerase subunit beta from Heterosigma akashiwo (Chromophytic alga).